Here is a 581-residue protein sequence, read N- to C-terminus: NADH-quinone oxidoreductase subunit C/D (581 aa).

The segment at 1–172 (MSAFELVTEL…PLFNMTASLF (172 aa)) is NADH dehydrogenase I subunit C. The segment at 196 to 581 (ELMILNYGPH…IDYVMSDVDR (386 aa)) is NADH dehydrogenase I subunit D.

In the N-terminal section; belongs to the complex I 30 kDa subunit family. The protein in the C-terminal section; belongs to the complex I 49 kDa subunit family. As to quaternary structure, NDH-1 is composed of 13 different subunits. Subunits NuoB, CD, E, F, and G constitute the peripheral sector of the complex.

It is found in the cell inner membrane. The enzyme catalyses a quinone + NADH + 5 H(+)(in) = a quinol + NAD(+) + 4 H(+)(out). Its function is as follows. NDH-1 shuttles electrons from NADH, via FMN and iron-sulfur (Fe-S) centers, to quinones in the respiratory chain. The immediate electron acceptor for the enzyme in this species is believed to be ubiquinone. Couples the redox reaction to proton translocation (for every two electrons transferred, four hydrogen ions are translocated across the cytoplasmic membrane), and thus conserves the redox energy in a proton gradient. The chain is NADH-quinone oxidoreductase subunit C/D from Rhodopseudomonas palustris (strain ATCC BAA-98 / CGA009).